A 136-amino-acid chain; its full sequence is Large ribosomal subunit protein uL16 (136 aa).

It belongs to the universal ribosomal protein uL16 family. In terms of assembly, part of the 50S ribosomal subunit.

Its function is as follows. Binds 23S rRNA and is also seen to make contacts with the A and possibly P site tRNAs. In Rickettsia prowazekii (strain Madrid E), this protein is Large ribosomal subunit protein uL16.